Here is a 72-residue protein sequence, read N- to C-terminus: Palustrin-2CG1 (72 aa).

Positions methionine 1–cysteine 22 are cleaved as a signal peptide. Positions glutamine 23 to valine 39 are cleaved as a propeptide — removed in mature form. Residues cysteine 64 and cysteine 70 are joined by a disulfide bond.

Expressed by the skin glands.

It localises to the secreted. Antimicrobial peptide active against a variety of Gram-positive and some Gram-negative bacterial strains. Has antifungal activity against a slime mold isolate. Has hemolytic activity against human erythrocytes. This Amolops chunganensis (Chungan torrent frog) protein is Palustrin-2CG1.